The chain runs to 281 residues: Probable feruloyl esterase A (281 aa).

Residues 1–21 (MKNFVSMHAILLACSAGAGLA) form the signal peptide. 3 disulfides stabilise this stretch: C50-C279, C112-C115, and C248-C255. A substrate-binding site is contributed by D98. N100 carries an N-linked (GlcNAc...) asparagine glycan. Position 101 (Y101) interacts with substrate. S154 acts as the Nucleophile in catalysis. N173 is a glycosylation site (N-linked (GlcNAc...) asparagine). D215 acts as the Charge relay system in catalysis. H268 provides a ligand contact to substrate. H268 (charge relay system) is an active-site residue.

It belongs to the AB hydrolase superfamily. FaeA family.

Its subcellular location is the secreted. The catalysed reaction is feruloyl-polysaccharide + H2O = ferulate + polysaccharide.. Functionally, involved in degradation of plant cell walls. Hydrolyzes the feruloyl-arabinose ester bond in arabinoxylans, and the feruloyl-galactose ester bond in pectin. The chain is Probable feruloyl esterase A (faeA) from Aspergillus flavus (strain ATCC 200026 / FGSC A1120 / IAM 13836 / NRRL 3357 / JCM 12722 / SRRC 167).